Consider the following 374-residue polypeptide: Diels-Alderase fsa2 (374 aa).

The segment at 1–216 (MSNVTVSAFT…MDRVWSPLSW (216 aa)) is beta-sandwich motif. Residues 216 to 374 (WPQVMTESYY…VGTGGQCELS (159 aa)) form a beta-barrel motif region.

The protein belongs to the Diels-Alderase family.

It carries out the reaction (5S)-3-[(2E,6R,8E,10E,12E)-2,6-dimethyltetradeca-2,8,10,12-tetraenoyl]-5-(hydroxymethyl)pyrrolidine-2,4-dione = trichosetin. Its pathway is mycotoxin biosynthesis. Functionally, diels-Alderase; part of the gene cluster that mediates the biosynthesis of the HIV-1 integrase inhibitor equisetin and of fusarisetin A, both trans-fused decalin-containing tetramic acids showing also antimicrobial activity. The PKS module of fsa1 together with the enoylreductase fsa3 catalyze the formation of the polyketide unit which is then conjugated to L-serine by the condensation domain of the fsa1 NRPS module. Activity of the Dieckmann cyclase domain (RED) results in release of the Dieckmann product intermediate. Diels-Alderase fsa2 is involved in endo-selective Diels-Alder cycloaddition to form the decalin ring, leading to the production of N-desmethylequisetin also called trichosetin. Subsequent N-methylation is carried out by fsa4 to give equisetin. The enzymatic gene responsible for the conversion of equisetin to fusarisetin A has not been identified yet and is probably located outside of the fsa cluster. The polypeptide is Diels-Alderase fsa2 (Fusarium sp. (strain FN080326)).